The chain runs to 3063 residues: Collagen alpha-1(XII) chain (3063 aa).

Residues 1-23 form the signal peptide; it reads MRSRLPPALAALGAALLLSSIEA. The 91-residue stretch at 27–117 folds into the Fibronectin type-III 1 domain; that stretch reads PPSDLNFKII…GQLTIQTGSS (91 aa). Residues 140 to 316 enclose the VWFA 1 domain; it reads DLVFLVDGSW…DIQNEIISQV (177 aa). The O-linked (Xyl...) (chondroitin sulfate) serine glycan is linked to Ser-329. In terms of domain architecture, Fibronectin type-III 2 spans 336-426; it reads PPSNLIAMEV…SIMEKTQPMK (91 aa). The VWFA 2 domain occupies 440 to 616; sequence DIVFLVDGSY…RISFELTQSI (177 aa). Fibronectin type-III domains follow at residues 634-722, 725-816, 817-905, 907-998, 999-1087, and 1089-1179; these read PPKD…TEEV, APRN…VRGN, PRDL…LEER, SPQD…LSQD, SKTL…ASRF, and SPRN…TLSD. Asn-700 carries an N-linked (GlcNAc...) asparagine glycan. Ser-798 carries an O-linked (Xyl...) (chondroitin sulfate) serine glycan. The segment at 799 to 830 is disordered; it reads GPGTPLTGNAATEEVRGNPRDLRVSDPTTSTM. Positions 811-822 are enriched in basic and acidic residues; it reads EEVRGNPRDLRV. Residues 862–864 carry the Cell attachment site motif; sequence RGD. Residues Ser-889 and Ser-981 are each glycosylated (O-linked (Xyl...) (chondroitin sulfate) serine). The interval 1077-1099 is disordered; it reads RQGSGTTASRFKSPRNLKTSDPT. The span at 1079 to 1099 shows a compositional bias: polar residues; sequence GSGTTASRFKSPRNLKTSDPT. Residues 1199–1371 enclose the VWFA 3 domain; the sequence is DIVLLVDGSW…ESLSRIVDDL (173 aa). 10 consecutive Fibronectin type-III domains span residues 1387–1476, 1477–1567, 1568–1658, 1659–1754, 1755–1849, 1850–1935, 1936–2026, 2027–2117, 2118–2206, and 2207–2294; these read APSN…LPVP, VVSL…LPLP, RPQD…VPAP, TNLK…APKS, GPRN…TVRN, LRVY…LMRG, LARN…LPRS, GPRN…VGLL, PPQN…LYLN, and VTDL…TVKP. A glycan (N-linked (GlcNAc...) asparagine) is linked at Asn-1763. N-linked (GlcNAc...) asparagine glycosylation is present at Asn-2206. A disordered region spans residues 2283 to 2312; it reads GVSVKEHTTVKPTEAPTEPPTPPPPPTIPP. The segment covering 2299-2311 has biased composition (pro residues); it reads TEPPTPPPPPTIP. The VWFA 4 domain maps to 2323-2496; sequence DIVFLTDASW…ESFEKIEDNL (174 aa). The nonhelical region (NC3) stretch occupies residues 2451-2746; that stretch reads SGFSVFVVGV…NSCTCTQDSV (296 aa). The 193-residue stretch at 2520-2712 folds into the Laminin G-like domain; sequence GFKMLEAYNL…IQSFDIVCSP (193 aa). N-linked (GlcNAc...) asparagine glycosylation is found at Asn-2528 and Asn-2679. 2 disordered regions span residues 2743 to 2896 and 2932 to 3063; these read QDSV…GDRG and NDYQ…PGSG. Collagen-like domains follow at residues 2747 to 2798, 2802 to 2852, 2853 to 2898, and 2941 to 2990; these read GPPG…GPNG, PGEQ…AMGP, RGPP…RGDI, and PGPP…GERG. Residues 2747–2898 form a triple-helical region (COL2) with 1 imperfection region; it reads GPPGPPGPAG…KGEKGDRGDI (152 aa). The Cell attachment site motif lies at 2779–2781; that stretch reads RGD. Over residues 2784–2794 the composition is skewed to pro residues; the sequence is PPGPQGPPGPQ. Positions 2817-2826 are enriched in low complexity; the sequence is PGLPGRTGTP. Pro residues-rich tracts occupy residues 2828–2837 and 2853–2862; these read LPGPPGPMGP and RGPPGPPGSP. The span at 2864–2874 shows a compositional bias: low complexity; sequence SPGVTGPSGKP. Positions 2895–2897 match the Cell attachment site motif; that stretch reads RGD. The tract at residues 2899 to 2941 is nonhelical region (NC2); it reads ASQNMMRAVARQVCEQLISGQMNRFNQMLNQIPNDYQSSRNQP. A compositionally biased stretch (pro residues) spans 2941–2950; sequence PGPPGPPGPP. Residues 2942–3044 are triple-helical region (COL1) with 2 imperfections; sequence GPPGPPGPPG…RGPPGPPGYC (103 aa). 14 positions are modified to 4-hydroxyproline: Pro-2944, Pro-2947, Pro-2950, Pro-2959, Pro-2965, Pro-2968, Pro-2971, Pro-2983, Pro-3000, Pro-3003, Pro-3014, Pro-3023, Pro-3026, and Pro-3029. Positions 2957-2966 are enriched in gly residues; the sequence is GEPGPGGRPG. Over residues 3006-3020 the composition is skewed to low complexity; it reads QGESRTGPPGSTGSR. The nonhelical region (NC1) stretch occupies residues 3045–3063; that stretch reads DSSQCASIPYNGQGYPGSG.

The protein belongs to the fibril-associated collagens with interrupted helices (FACIT) family. In terms of assembly, trimer of identical chains each containing 190 kDa of non-triple-helical sequences. In terms of processing, the triple-helical tail is stabilized by disulfide bonds at each end. Post-translationally, hydroxylation on proline residues within the sequence motif, GXPG, is most likely to be 4-hydroxy as this fits the requirement for 4-hydroxylation in vertebrates. Isoform 1 O-glycosylation; glycosaminoglycan of chondroitin-sulfate type. In terms of tissue distribution, found in collagen I-containing tissues: both isoform 1 and isoform 2 appear in amnion, chorion, skeletal muscle, small intestine, and in cell culture of dermal fibroblasts, keratinocytes and endothelial cells. Only isoform 2 is found in lung, placenta, kidney and a squamous cell carcinoma cell line. Isoform 1 is also present in the corneal epithelial Bowman's membrane (BM) and the interfibrillar matrix of the corneal stroma, but it is not detected in the limbal BM.

It is found in the secreted. Its subcellular location is the extracellular space. It localises to the extracellular matrix. Its function is as follows. Type XII collagen interacts with type I collagen-containing fibrils, the COL1 domain could be associated with the surface of the fibrils, and the COL2 and NC3 domains may be localized in the perifibrillar matrix. The protein is Collagen alpha-1(XII) chain (COL12A1) of Homo sapiens (Human).